Here is a 628-residue protein sequence, read N- to C-terminus: FAD-linked oxidoreductase hmp9 (628 aa).

A signal peptide spans 1–29; it reads MFCIIRAQLLLLLHLLVLALLLVGTVCNA. The interval 34-53 is disordered; sequence GHPSELEPLALKRGGSPRDD. Asparagine 80 and asparagine 133 each carry an N-linked (GlcNAc...) asparagine glycan. The 186-residue stretch at 152-337 folds into the FAD-binding PCMH-type domain; sequence LGQLPVYAID…LKTKIKAYPN (186 aa). N-linked (GlcNAc...) asparagine glycosylation is present at asparagine 356.

The protein belongs to the oxygen-dependent FAD-linked oxidoreductase family.

The protein operates within secondary metabolite biosynthesis. Its function is as follows. FAD-linked oxidoreductase; part of the gene cluster that mediates the biosynthesis of hypothemycin, a resorcylic acid lactone (RAL) that irreversibly inhibits a subset of protein kinases with a conserved cysteine in the ATP binding site such as human ERK2. The first step is performed by both PKSs hmp3 and hmp8 and leads to the production of 7',8'-dehydrozearalenol (DHZ). The highly reducing PKS hpm8 synthesizes the reduced hexaketide (7S,11S,2E,8E)-7,11-dihydroxy-dodeca-2,8-dienoate, which is transferred downstream to the non-reducing PKS hpm3. Hpm3 then extends the reduced hexaketide to a nonaketide, after which regioselective cyclization and macrolactonization affords DHZ. The next step is the conversion of DHZ into aigialomycin C and is performed by the O-methyltransferase hmp5, the FAD-binding monooxygenase hmp7, and the cytochrome P450 monooxygenase hmp1. The wide substrate tolerance of the hmp5 and hmp7 implies that the reactions from DHZ to aigialomycin C can occur in any order. The steps from aigialomycin C to hypothemycin are less well established. The FAD-linked oxidoreductase hmp9 presumably catalyzes oxidation of the C-6' hydroxyl to a ketone. The timing of this oxidation is important, since the resulting enone functional group is a Michael acceptor that can react spontaneously with glutathione, an abundant metabolite in fungal cells. The glutathione S-transferase hmp2 catalyzes cis-trans isomerization of the 7',8' double bond with equilibrium favoring the trans isomer. The hpm6-encoded transporter might preferentially pump hypothemycin out of the cell relative to the trans isomer aigialomycin A. The cis-to-trans isomerization may be coupled with C-4' hydroxylation, since all known hypothemycin analogs containing the enone functional group also have hydroxyl groups at both C-4' and C-5'. The sequence is that of FAD-linked oxidoreductase hmp9 from Hypomyces subiculosus (Nectria subiculosa).